We begin with the raw amino-acid sequence, 285 residues long: RNA polymerase sigma factor RpoH (285 aa).

The tract at residues 53–122 (LILSHLRFVI…IHEYVLRNWR (70 aa)) is sigma-70 factor domain-2. The Interaction with polymerase core subunit RpoC signature appears at 77–80 (DLIQ). The sigma-70 factor domain-4 stretch occupies residues 229 to 281 (ALLRLDERSRNIIRARWLDKKEKNTLQKIANNYGISAERVRQLEKNAMKKLKI). The H-T-H motif DNA-binding region spans 254–273 (LQKIANNYGISAERVRQLEK).

It belongs to the sigma-70 factor family. RpoH subfamily. In terms of assembly, interacts with the RNA polymerase core enzyme.

Its subcellular location is the cytoplasm. Its function is as follows. Sigma factors are initiation factors that promote the attachment of RNA polymerase to specific initiation sites and are then released. This sigma factor is involved in regulation of expression of heat shock genes. The protein is RNA polymerase sigma factor RpoH of Buchnera aphidicola subsp. Schizaphis graminum (strain Sg).